A 136-amino-acid chain; its full sequence is MARLFVVVALLALAVGTVFAADAPSAAPTASPTKSPTKAPAAAPKSSAAAPKASSPVAEEPTPEDDYSAASPSDSAEAPTVSSPPAPTPEADGPSSDGPSSDGPAAAESPKSGATTNVKLSIAGTVAAAGFFIFSL.

The signal sequence occupies residues 1–20 (MARLFVVVALLALAVGTVFA). Composition is skewed to low complexity over residues 24–56 (PSAA…ASSP), 68–81 (SAAS…APTV), and 89–107 (PEAD…PAAA). Residues 24–115 (PSAAPTASPT…AAESPKSGAT (92 aa)) are disordered. Ser-112 carries the GPI-anchor amidated serine lipid modification. Residues 113–136 (GATTNVKLSIAGTVAAAGFFIFSL) constitute a propeptide, removed in mature form.

Belongs to the classical AGP family. In terms of processing, O-glycosylated on the hydroxyproline residues.

The protein resides in the cell membrane. Its function is as follows. Proteoglycan that seems to be implicated in diverse developmental roles such as differentiation, cell-cell recognition, embryogenesis and programmed cell death. The protein is Classical arabinogalactan protein 11 (AGP11) of Arabidopsis thaliana (Mouse-ear cress).